The chain runs to 290 residues: Signal recognition particle receptor subunit beta (290 aa).

A helical membrane pass occupies residues 44-64 (VLLLALFTLIFIIIISKLFGS). GTP is bound by residues 92-100 (GLSNAGKTA), 114-117 (THTS), G140, and A268.

Belongs to the SRP receptor beta subunit family. As to quaternary structure, heterodimer of an alpha and a beta chain.

Its subcellular location is the endoplasmic reticulum membrane. In terms of biological role, component of the signal recognition particle (SRP) complex receptor (SR). Ensures, in conjunction with the SRP complex, the correct targeting of the nascent secretory proteins to the endoplasmic reticulum membrane system. May mediate the membrane association of SR. The chain is Signal recognition particle receptor subunit beta (srprb) from Dictyostelium discoideum (Social amoeba).